The primary structure comprises 264 residues: Short-chain dehydrogenase/reductase ucsE (264 aa).

The helical transmembrane segment at L13–V32 threads the bilayer. 3 residues coordinate NADP(+): L23, S43, and D74. N125 carries N-linked (GlcNAc...) asparagine glycosylation. 2 residues coordinate NADP(+): R130 and K139. S157 (proton donor) is an active-site residue. V202 and T204 together coordinate NADP(+).

The protein belongs to the short-chain dehydrogenases/reductases (SDR) family. The cofactor is NADP(+).

The protein resides in the membrane. The protein operates within mycotoxin biosynthesis. Its function is as follows. Short-chain dehydrogenase/reductase; part of the gene cluster that mediates the biosynthesis of UCS1025A, a member of the pyrrolizidinone family that acts as a strong telomerase inhibitor and displays potent antibacterial and antitumor properties. These compounds share a hemiaminal-containing pyrrolizidinone core fused with a gamma-lactone, giving a furopyrrolizidine that is connected to a decalin fragment. The polyketide synthase module (PKS) of the PKS-NRPS ucsA is responsible for the synthesis of the polyketide backbone via the condensation of an acetyl-CoA starter unit with 6 malonyl-CoA units. The downstream nonribosomal peptide synthetase (NRPS) module then amidates the carboxyl end of the polyketide with a 2S,3S-methylproline derived from L-isoleucine by the 2-oxoglutarate-dependent dioxygenase ucsF which converts L-isoleucine to (4S,5S)-4-methylpyrroline-5-carboxylate that is further converted to 2S,3S-methylproline by the pyrroline-5-carboxylate reductase ucsG. Reductive release of the completed aminoacyl polyketide from the assembly line can form the 3-pyrrolin-2-one structure via an intramolecular Knoevenagel reaction. Because ucsA lacks a designated enoylreductase (ER) domain, the required activity is provided the enoyl reductase ucsL. This keto acyclic precursor is the substrate of the Diels-Alderase ucsH, that catalyzes the Diels-Alder cycloaddition. Oxidation of the 3S-methyl group to a carboxylate by the cytochrome P450 monooxygenase ucsK allows an oxa-Michael cyclization that might involve the reductase/dehydrogenase ucsI and which furnishes the furopyrrolizidine. The oxidase ucsJ likely plays a critical role in stereoselective reduction of the C5-C6 double bond to afford the required R-configured carboxylate group. Further enolization and oxidation at C5 by an unidentified enzyme affords the last intermediate that can undergo oxa-Michael cyclization to yield UCS1025A. The polypeptide is Short-chain dehydrogenase/reductase ucsE (Acremonium sp).